The chain runs to 618 residues: Acetolactate synthase (618 aa).

The segment at 1–30 is disordered; the sequence is MSAPTKPHSPTFKPEPHSAANEPKHPAARP. E85 contacts thiamine diphosphate. FAD-binding positions include R187, 293–314, and 336–355; these read HGTVAAVAALQRSDLLIALGTR and DIDPAEIGKNRHADVPIVGD. Residues 429-509 form a thiamine pyrophosphate binding region; the sequence is QHQMWAAQFI…VKVALINNGN (81 aa). Mg(2+) contacts are provided by D480 and N507.

It belongs to the TPP enzyme family. Requires Mg(2+) as cofactor. The cofactor is thiamine diphosphate.

The enzyme catalyses 2 pyruvate + H(+) = (2S)-2-acetolactate + CO2. It functions in the pathway amino-acid biosynthesis; L-isoleucine biosynthesis; L-isoleucine from 2-oxobutanoate: step 1/4. The protein operates within amino-acid biosynthesis; L-valine biosynthesis; L-valine from pyruvate: step 1/4. The polypeptide is Acetolactate synthase (ilvB) (Mycobacterium bovis (strain ATCC BAA-935 / AF2122/97)).